Here is a 330-residue protein sequence, read N- to C-terminus: Beta-hexosaminidase (330 aa).

Substrate is bound by residues aspartate 62, arginine 70, arginine 133, and 163 to 164; that span reads KH. The Proton donor/acceptor role is filled by histidine 176. Residue aspartate 246 is the Nucleophile of the active site.

The protein belongs to the glycosyl hydrolase 3 family. NagZ subfamily.

It localises to the cytoplasm. The catalysed reaction is Hydrolysis of terminal non-reducing N-acetyl-D-hexosamine residues in N-acetyl-beta-D-hexosaminides.. Its pathway is cell wall biogenesis; peptidoglycan recycling. Plays a role in peptidoglycan recycling by cleaving the terminal beta-1,4-linked N-acetylglucosamine (GlcNAc) from peptide-linked peptidoglycan fragments, giving rise to free GlcNAc, anhydro-N-acetylmuramic acid and anhydro-N-acetylmuramic acid-linked peptides. In Idiomarina loihiensis (strain ATCC BAA-735 / DSM 15497 / L2-TR), this protein is Beta-hexosaminidase.